The following is a 163-amino-acid chain: Acetolactate synthase small subunit (163 aa).

The ACT domain maps to 4–79 (ILSVLLENES…VFKVVNLSEQ (76 aa)).

Belongs to the acetolactate synthase small subunit family. Dimer of large and small chains.

The catalysed reaction is 2 pyruvate + H(+) = (2S)-2-acetolactate + CO2. Its pathway is amino-acid biosynthesis; L-isoleucine biosynthesis; L-isoleucine from 2-oxobutanoate: step 1/4. The protein operates within amino-acid biosynthesis; L-valine biosynthesis; L-valine from pyruvate: step 1/4. This chain is Acetolactate synthase small subunit (ilvH), found in Haemophilus influenzae (strain ATCC 51907 / DSM 11121 / KW20 / Rd).